The following is a 207-amino-acid chain: Small ribosomal subunit protein uS4c (207 aa).

In terms of domain architecture, S4 RNA-binding spans 92–155 (MRLDNILFRL…TYQSILSKRI (64 aa)).

Belongs to the universal ribosomal protein uS4 family. Part of the 30S ribosomal subunit. Contacts protein S5. The interaction surface between S4 and S5 is involved in control of translational fidelity.

Its subcellular location is the plastid. It is found in the chloroplast. One of the primary rRNA binding proteins, it binds directly to 16S rRNA where it nucleates assembly of the body of the 30S subunit. Functionally, with S5 and S12 plays an important role in translational accuracy. The sequence is that of Small ribosomal subunit protein uS4c (rps4) from Equisetum giganteum (Giant horsetail).